The chain runs to 392 residues: UPF0229 protein CPE1333 (392 aa).

The interval 75-100 (VTTGTGEERRGDRISSDKRKAISNNK) is disordered. Over residues 80-94 (GEERRGDRISSDKRK) the composition is skewed to basic and acidic residues.

Belongs to the UPF0229 family.

The chain is UPF0229 protein CPE1333 from Clostridium perfringens (strain 13 / Type A).